Here is a 217-residue protein sequence, read N- to C-terminus: MESVALYSFQATESDELAFNKGDTLKILNMEDDQNWYKAELRGAEGFVPKNYIRLKPHPWYSGRISRQLAEEILMKRNHQGAFLIRESESSPGEFSVSVNYGDQVQHFKVLRDPSGKYYLWEEKFNSLNELVAFYRTTTIAKKRQVFLQDEEPLPKPPRACFAQAQFDFSAQDPSQLSFRRGDIIEVLERLDPSWWRGRLSGRIGFFPRSYVQPVHM.

The SH3 1 domain occupies 1 to 58 (MESVALYSFQATESDELAFNKGDTLKILNMEDDQNWYKAELRGAEGFVPKNYIRLKPH). The 93-residue stretch at 60-152 (WYSGRISRQL…KRQVFLQDEE (93 aa)) folds into the SH2 domain. The region spanning 158 to 217 (PRACFAQAQFDFSAQDPSQLSFRRGDIIEVLERLDPSWWRGRLSGRIGFFPRSYVQPVHM) is the SH3 2 domain.

The protein belongs to the GRB2/sem-5/DRK family. In terms of assembly, associates through its SH2 domain with ligand-activated receptors for stem cell factor (KIT) and erythropoietin (EPOR). Also forms a stable complex with the Bcr-Abl oncoprotein. GRAP is associated with the Ras guanine nucleotide exchange factor SOS1, primarily through its N-terminal SH3 domain. Interacts with phosphorylated LAT upon TCR activation. Interacts with SHB.

It is found in the membrane. The protein localises to the synapse. In terms of biological role, couples signals from receptor and cytoplasmic tyrosine kinases to the Ras signaling pathway. Plays a role in the inner ear and in hearing. The chain is GRB2-related adapter protein (GRAP) from Bos taurus (Bovine).